Reading from the N-terminus, the 415-residue chain is Histidine--tRNA ligase (415 aa).

This sequence belongs to the class-II aminoacyl-tRNA synthetase family. As to quaternary structure, homodimer.

The protein localises to the cytoplasm. The catalysed reaction is tRNA(His) + L-histidine + ATP = L-histidyl-tRNA(His) + AMP + diphosphate + H(+). This Gluconobacter oxydans (strain 621H) (Gluconobacter suboxydans) protein is Histidine--tRNA ligase.